Here is a 222-residue protein sequence, read N- to C-terminus: 7-cyano-7-deazaguanine synthase (222 aa).

11-21 (FSGGQDSTTCL) serves as a coordination point for ATP. 4 residues coordinate Zn(2+): C187, C195, C198, and C201.

This sequence belongs to the QueC family. Zn(2+) is required as a cofactor.

It catalyses the reaction 7-carboxy-7-deazaguanine + NH4(+) + ATP = 7-cyano-7-deazaguanine + ADP + phosphate + H2O + H(+). It participates in purine metabolism; 7-cyano-7-deazaguanine biosynthesis. Functionally, catalyzes the ATP-dependent conversion of 7-carboxy-7-deazaguanine (CDG) to 7-cyano-7-deazaguanine (preQ(0)). The sequence is that of 7-cyano-7-deazaguanine synthase from Actinobacillus pleuropneumoniae serotype 5b (strain L20).